A 320-amino-acid polypeptide reads, in one-letter code: Ferrochelatase (320 aa).

Fe cation-binding residues include histidine 194 and glutamate 275.

This sequence belongs to the ferrochelatase family. As to quaternary structure, monomer.

It localises to the cytoplasm. The catalysed reaction is heme b + 2 H(+) = protoporphyrin IX + Fe(2+). Its pathway is porphyrin-containing compound metabolism; protoheme biosynthesis; protoheme from protoporphyrin-IX: step 1/1. Its function is as follows. Catalyzes the ferrous insertion into protoporphyrin IX. This Salmonella arizonae (strain ATCC BAA-731 / CDC346-86 / RSK2980) protein is Ferrochelatase.